Consider the following 363-residue polypeptide: Elongation factor Tu, chloroplastic (363 aa).

The tr-type G domain occupies 1–189; sequence TLTAAITMAL…NVDEYIPTPE (189 aa). Residues 55–59 and 110–113 contribute to the GTP site; these read DCPGH and NKED.

It belongs to the TRAFAC class translation factor GTPase superfamily. Classic translation factor GTPase family. EF-Tu/EF-1A subfamily.

Its subcellular location is the plastid. It localises to the chloroplast. It carries out the reaction GTP + H2O = GDP + phosphate + H(+). Its function is as follows. GTP hydrolase that promotes the GTP-dependent binding of aminoacyl-tRNA to the A-site of ribosomes during protein biosynthesis. This chain is Elongation factor Tu, chloroplastic (tufA), found in Gymnochlora stellata.